The primary structure comprises 294 residues: Probable 2-(5''-triphosphoribosyl)-3'-dephosphocoenzyme-A synthase (294 aa).

Belongs to the CitG/MdcB family.

It catalyses the reaction 3'-dephospho-CoA + ATP = 2'-(5''-triphospho-alpha-D-ribosyl)-3'-dephospho-CoA + adenine. The sequence is that of Probable 2-(5''-triphosphoribosyl)-3'-dephosphocoenzyme-A synthase from Streptococcus equi subsp. equi (strain 4047).